Reading from the N-terminus, the 242-residue chain is Transcription factor bHLH100 (242 aa).

The bHLH domain maps to 61–113 (MKKLNHNASERERRKKINTMFSSLRSCLPPTNQTKKLSVSATVSQALKYIPEL).

Homodimer. Expressed constitutively in roots, leaves, and stems.

It is found in the nucleus. In terms of biological role, plays a role in metal homeostasis. Confers tolerance to high zinc (Zn) and nickel (Ni). The sequence is that of Transcription factor bHLH100 (BHLH100) from Arabidopsis thaliana (Mouse-ear cress).